Consider the following 2439-residue polypeptide: Centrosomal protein of 290 kDa (2439 aa).

2 coiled-coil regions span residues 75 to 913 and 1271 to 1576; these read AEQA…VVTE and NTML…YMDT. Disordered regions lie at residues 1802 to 1824, 1867 to 1890, and 2017 to 2048; these read ETLN…EKEA, ELDR…KSSK, and ESRL…FQKE. Residues 2039–2048 show a composition bias toward basic and acidic residues; that stretch reads SQREHEFQKE. The stretch at 2046 to 2394 forms a coiled coil; it reads QKENLRLSTE…KLTQELKHFD (349 aa).

In terms of assembly, part of the tectonic-like complex (also named B9 complex).

It localises to the cytoplasm. It is found in the cytoskeleton. Its subcellular location is the microtubule organizing center. The protein resides in the centrosome. The protein localises to the centriolar satellite. It localises to the nucleus. It is found in the cilium basal body. Its function is as follows. Involved in early and late steps in cilia formation. May play a role in early ciliogenesis in the disappearance of centriolar satellites and in the transition of primary ciliar vesicles (PCVs) to capped ciliary vesicles (CCVs). In the ciliary transition zone is part of the tectonic-like complex which is required for tissue-specific ciliogenesis and may regulate ciliary membrane composition. Involved in regulation of the BBSome complex integrity and in ciliary targeting of selected BBSome cargos. Required for the correct localization of ciliary and phototransduction proteins in retinal photoreceptor cells; may play a role in ciliary transport processes. Involved in development of the nervous system and kidney. This chain is Centrosomal protein of 290 kDa (cep290), found in Danio rerio (Zebrafish).